The chain runs to 117 residues: Large ribosomal subunit protein bL19 (117 aa).

It belongs to the bacterial ribosomal protein bL19 family.

Its function is as follows. This protein is located at the 30S-50S ribosomal subunit interface and may play a role in the structure and function of the aminoacyl-tRNA binding site. In Vibrio parahaemolyticus serotype O3:K6 (strain RIMD 2210633), this protein is Large ribosomal subunit protein bL19.